The primary structure comprises 206 residues: Ribosomal RNA small subunit methyltransferase G (206 aa).

S-adenosyl-L-methionine-binding positions include G73, L78, 124-125, and R139; that span reads VE.

It belongs to the methyltransferase superfamily. RNA methyltransferase RsmG family.

The protein localises to the cytoplasm. It carries out the reaction guanosine(527) in 16S rRNA + S-adenosyl-L-methionine = N(7)-methylguanosine(527) in 16S rRNA + S-adenosyl-L-homocysteine. Specifically methylates the N7 position of guanine in position 527 of 16S rRNA. This chain is Ribosomal RNA small subunit methyltransferase G, found in Serratia proteamaculans (strain 568).